Here is a 160-residue protein sequence, read N- to C-terminus: Putative pre-16S rRNA nuclease (160 aa).

This sequence belongs to the YqgF nuclease family.

Its subcellular location is the cytoplasm. Functionally, could be a nuclease involved in processing of the 5'-end of pre-16S rRNA. This Cereibacter sphaeroides (strain ATCC 17029 / ATH 2.4.9) (Rhodobacter sphaeroides) protein is Putative pre-16S rRNA nuclease.